Consider the following 96-residue polypeptide: Alpha-elapitoxin-Al2b (96 aa).

Positions 1-21 (MKTLLLTLVVVTIVCLDFGGG) are cleaved as a signal peptide. 5 disulfides stabilise this stretch: C24–C41, C34–C62, C47–C51, C66–C77, and C78–C83.

Belongs to the three-finger toxin family. Long-chain subfamily. Type II alpha-neurotoxin sub-subfamily. As to expression, expressed by the venom gland.

Its subcellular location is the secreted. Functionally, potent long-chain postsynaptic neurotoxin. Pseudo-irreversibly inhibits the nicotinic acetylcholine receptor through competitive antagonism. The protein is Alpha-elapitoxin-Al2b of Austrelaps labialis (Pygmy copperhead).